The sequence spans 234 residues: MSWRADILTLFPNMFPGPLGFSLAGRALERGIWSCEAHDLRQHGLGRHRAVDDTPFGGGAGMVMRADVLDTALSALPALDGRPVVYPTPRGRRISHEDAERLSSGPGVVVLCGRFEGVDERVLEKHDIEQLCMGDVVLSGGEIPALTLLDACVRLLPGVMGSDVSGQDESFADGLLEYPQYTKPAVWDGRDVPDILLSGNHGAIARWRHEQSIAVTKARRPDLWDAYLARQQVH.

Residue Gly-113 coordinates S-adenosyl-L-methionine.

The protein belongs to the RNA methyltransferase TrmD family. As to quaternary structure, homodimer.

Its subcellular location is the cytoplasm. It carries out the reaction guanosine(37) in tRNA + S-adenosyl-L-methionine = N(1)-methylguanosine(37) in tRNA + S-adenosyl-L-homocysteine + H(+). Functionally, specifically methylates guanosine-37 in various tRNAs. The polypeptide is tRNA (guanine-N(1)-)-methyltransferase (Gluconobacter oxydans (strain 621H) (Gluconobacter suboxydans)).